The primary structure comprises 498 residues: Acetyl-coenzyme A carboxylase carboxyl transferase subunit beta, chloroplastic (498 aa).

The CoA carboxyltransferase N-terminal domain maps to 228 to 498; sequence LWVQCEICYG…LNHNLSRTLT (271 aa). Zn(2+)-binding residues include Cys232, Cys235, Cys251, and Cys254. The segment at 232–254 adopts a C4-type zinc-finger fold; that stretch reads CEICYGLNYKKFFKSKMNICEQC.

This sequence belongs to the AccD/PCCB family. In terms of assembly, acetyl-CoA carboxylase is a heterohexamer composed of biotin carboxyl carrier protein, biotin carboxylase and 2 subunits each of ACCase subunit alpha and ACCase plastid-coded subunit beta (accD). Zn(2+) serves as cofactor.

It localises to the plastid. It is found in the chloroplast stroma. It carries out the reaction N(6)-carboxybiotinyl-L-lysyl-[protein] + acetyl-CoA = N(6)-biotinyl-L-lysyl-[protein] + malonyl-CoA. Its pathway is lipid metabolism; malonyl-CoA biosynthesis; malonyl-CoA from acetyl-CoA: step 1/1. Functionally, component of the acetyl coenzyme A carboxylase (ACC) complex. Biotin carboxylase (BC) catalyzes the carboxylation of biotin on its carrier protein (BCCP) and then the CO(2) group is transferred by the transcarboxylase to acetyl-CoA to form malonyl-CoA. This chain is Acetyl-coenzyme A carboxylase carboxyl transferase subunit beta, chloroplastic, found in Populus alba (White poplar).